The sequence spans 211 residues: Putative hydrolase SMU_367 (211 aa).

The first 29 residues, 1 to 29 (MKKQFLEKAVFTVAATAATVVLGNKMADA), serve as a signal peptide directing secretion. Residues 30–74 (DTYTLQEGDSFFSVAQRYHMDAYELASMNGKDITSLILPGQTLTV) form the LysM domain. The segment at 77–101 (SAAPDNQAAAPTDTTQATTETNDAN) is disordered. Over residues 78–101 (AAPDNQAAAPTDTTQATTETNDAN) the composition is skewed to low complexity. A Peptidase C51 domain is found at 85–209 (AAPTDTTQAT…GTPGSVSYIY (125 aa)).

The chain is Putative hydrolase SMU_367 from Streptococcus mutans serotype c (strain ATCC 700610 / UA159).